A 312-amino-acid polypeptide reads, in one-letter code: Protein phosphatase PTC7 homolog fig (312 aa).

The PPM-type phosphatase domain occupies 42 to 306; it reads IQGSSKDQLA…DDITVILASV (265 aa). Residues aspartate 83, glycine 84, and aspartate 228 each coordinate Mn(2+).

This sequence belongs to the PP2C family. It depends on Mg(2+) as a cofactor. Mn(2+) serves as cofactor.

It carries out the reaction O-phospho-L-seryl-[protein] + H2O = L-seryl-[protein] + phosphate. It catalyses the reaction O-phospho-L-threonyl-[protein] + H2O = L-threonyl-[protein] + phosphate. The sequence is that of Protein phosphatase PTC7 homolog fig from Drosophila mojavensis (Fruit fly).